The primary structure comprises 343 residues: Ribosomal RNA small subunit methyltransferase H (343 aa).

S-adenosyl-L-methionine contacts are provided by residues 39–41 (AGH), Asp58, Phe87, Asp108, and Gln115.

The protein belongs to the methyltransferase superfamily. RsmH family.

It localises to the cytoplasm. The catalysed reaction is cytidine(1402) in 16S rRNA + S-adenosyl-L-methionine = N(4)-methylcytidine(1402) in 16S rRNA + S-adenosyl-L-homocysteine + H(+). Its function is as follows. Specifically methylates the N4 position of cytidine in position 1402 (C1402) of 16S rRNA. This chain is Ribosomal RNA small subunit methyltransferase H, found in Bifidobacterium adolescentis (strain ATCC 15703 / DSM 20083 / NCTC 11814 / E194a).